The primary structure comprises 217 residues: External core antigen (217 aa).

Residues 1 to 20 (MYLFHLCLVFACVPCPTVQA) form the signal peptide. The interval 26-28 (GWL) is HBEAG. The interval 166–217 (APILSTLPEHTVIRRRGGSRAARSPRRRTPSPRRRRSQSPRRRRSQSPASNC) is disordered. Over residues 178-210 (IRRRGGSRAARSPRRRTPSPRRRRSQSPRRRRS) the composition is skewed to basic residues. One copy of the 1; half-length repeat lies at 189–195 (SPRRRTP). Positions 189–211 (SPRRRTPSPRRRRSQSPRRRRSQ) are 3 X 8 AA repeats of S-P-R-R-R-R-S-Q. A propeptide spanning residues 189-217 (SPRRRTPSPRRRRSQSPRRRRSQSPASNC) is cleaved from the precursor. 2 tandem repeats follow at residues 196–203 (SPRRRRSQ) and 204–211 (SPRRRRSQ).

Belongs to the orthohepadnavirus precore antigen family. Homodimerizes. Phosphorylated. Post-translationally, cleaved by host furin.

It localises to the secreted. Its subcellular location is the host nucleus. Functionally, may regulate immune response to the intracellular capsid in acting as a T-cell tolerogen, by having an immunoregulatory effect which prevents destruction of infected cells by cytotoxic T-cells. This immune regulation may predispose to chronicity during perinatal infections and prevent severe liver injury during adult infections. This Otospermophilus beecheyi (California ground squirrel) protein is External core antigen.